A 442-amino-acid polypeptide reads, in one-letter code: DNA topoisomerase 6 subunit A3 (442 aa).

The interval 1–34 (MSEKKRRGGAGAGAASGSASKKPRVSTAASYAES) is disordered. The region spanning 91-224 (QDSASVTSRI…LHVVASEKGV (134 aa)) is the Topo IIA-type catalytic domain. Tyr-185 acts as the O-(5'-phospho-DNA)-tyrosine intermediate in catalysis. Residues Glu-271 and Asp-323 each contribute to the Mg(2+) site.

Belongs to the TOP6A family. As to quaternary structure, homodimer. Heterotetramer of two TOP6A and two TOP6B subunits. Interacts with TOP6B. The cofactor is Mg(2+). As to expression, highly expressed in flowers before pollination. Expressed in roots and shoots.

It localises to the nucleus. The catalysed reaction is ATP-dependent breakage, passage and rejoining of double-stranded DNA.. Component of the DNA topoisomerase VI involved in chromatin organization and progression of endoreduplication cycles. Relaxes both positive and negative superturns and exhibits a strong decatenase activity. May be involved in cell proliferation and stress tolerance. The protein is DNA topoisomerase 6 subunit A3 of Oryza sativa subsp. indica (Rice).